Consider the following 766-residue polypeptide: MASEPVNGGEGIDGAREKQIIKVYKRKGKGQRKQSSFFALEAAIEKPEGLLENENDNNDVSPAETLAPEFEDPIVVVKNSIEEAALGTNSHGDKNLTEAPSENLPGDDSDKVIDKPLVEAFSQAQPQDDASLAAMDKSEEVPSQIPKAQDDVNTVVVDENSIKEPPKSLAQEDVTTVIVDKNPIEAPSQTLSLEDGDTLVVDKNPIEVSSEEDVHVIDADNLIKEAHPENFVERDTTDAQQPAGLTSDSAHATAAGSMPMEEDADGRIRIHVASTTKQQKEEIRKKLEDQLNVVRGMVKKIEDKEGEIGAYNDSRVLINTGINNGGGRILSGFASAGLPREVIRAPRPVNQLSISVLENTQGVNEHVEKEKRTPKANQFYRNSEFLLGDKLPPAESNKKSKSSSKKQGGDVGHGFGAGTKVFKNCSALLERLMKHKHGWVFNAPVDVKGLGLLDYYTIIEHPMDLGTIKSALMKNLYKSPREFAEDVRLTFHNAMTYNPEGQDVHLMAVTLLQIFEERWAVIEADYNREMRFVTGYEMNLPTPTMRSRLGPTMPPPPINVRNTIDRADWSNRQPTTTPGRTPTSATPSGRTPALKKPKANEPNKRDMTYEEKQKLSGHLQNLPPDKLDAIVQIVNKRNTAVKLRDEEIEVDIDSVDPETLWELDRFVTNYKKGLSKKKRKAELAIQARAEAERNSQQQMAPAPAAHEFSREGGNTAKKTLPTPLPSQVEKQNNETSRSSSSSSSSSSSSSSDSDSDSSSSSGSDQT.

Disordered stretches follow at residues 87 to 108, 234 to 262, and 388 to 412; these read GTNS…PGDD, RDTT…PMEE, and GDKL…GDVG. Over residues 238–250 the composition is skewed to polar residues; it reads DAQQPAGLTSDSA. One can recognise a Bromo domain in the interval 416–522; that stretch reads GAGTKVFKNC…QIFEERWAVI (107 aa). 2 disordered regions span residues 544–606 and 687–766; these read TMRS…NKRD and ARAE…SDQT. Positions 574 to 589 are enriched in low complexity; sequence PTTTPGRTPTSATPSG. The 82-residue stretch at 597–678 folds into the NET domain; sequence PKANEPNKRD…NYKKGLSKKK (82 aa). Positions 736-766 are enriched in low complexity; sequence SRSSSSSSSSSSSSSSDSDSDSSSSSGSDQT.

Ubiquitously expressed.

The protein localises to the nucleus. Functionally, involved in the activation and maintenance of cell division in the meristems and by this controls cell numbers in differentiated organs. Its action in cell cycle regulation may be directed through the RB-E2F pathway. The protein is Transcription factor GTE4 (GTE4) of Arabidopsis thaliana (Mouse-ear cress).